The sequence spans 209 residues: uncharacterized protein (209 aa).

4 helical membrane-spanning segments follow: residues 21 to 41 (LAYL…VFGL), 81 to 101 (ILGL…RIAA), 107 to 127 (VLVN…LYVF), and 159 to 179 (AAGA…LLFF).

The protein localises to the cell membrane. This is an uncharacterized protein from Bacillus subtilis (strain 168).